Consider the following 418-residue polypeptide: Zinc metalloproteinase nas-8 (418 aa).

Positions 1–28 (MMNRASLCRIAVLLCILHLSHLIDSTYA) are cleaved as a signal peptide. A propeptide spanning residues 29–100 (QSYLTEKDFL…TSKLKSGVRR (72 aa)) is cleaved from the precursor. Residues 101 to 296 (NGVTSVIKRW…LKINKLYNCP (196 aa)) enclose the Peptidase M12A domain. 5 disulfide bridges follow: C143/C295, C165/C184, C347/C381, C354/C374, and C361/C378. A Zn(2+)-binding site is contributed by H192. Residue E193 is part of the active site. Residues H196 and H202 each coordinate Zn(2+). The region spanning 347–381 (CSDRTNLCWRWLDRCRSYFFEKIMKEFCALSCGYC) is the ShKT domain.

It depends on Zn(2+) as a cofactor.

Its subcellular location is the secreted. It carries out the reaction Hydrolysis of peptide bonds in substrates containing five or more amino acids, preferentially with Ala in P1', and Pro in P2'.. With respect to regulation, inhibited by ethylene glycol-bis(2-aminoethylether)-N,N,N,N-tetraacetic acid (EGTA), ethylenediaminetetraacetic acid (EDTA) and o-phenanthroline. In terms of biological role, metalloprotease. The protein is Zinc metalloproteinase nas-8 of Steinernema carpocapsae (Entomopathogenic nematode).